Here is a 166-residue protein sequence, read N- to C-terminus: Co-chaperone protein HscB homolog (166 aa).

A J domain is found at 3 to 75 (QYFTLFRIEP…IDRAAYLLKT (73 aa)).

It belongs to the HscB family. As to quaternary structure, interacts with HscA and stimulates its ATPase activity.

In terms of biological role, co-chaperone involved in the maturation of iron-sulfur cluster-containing proteins. Seems to help targeting proteins to be folded toward HscA. The chain is Co-chaperone protein HscB homolog from Neisseria meningitidis serogroup A / serotype 4A (strain DSM 15465 / Z2491).